The chain runs to 163 residues: Nucleotide-binding protein Mflv_5248 (163 aa).

This sequence belongs to the YajQ family.

In terms of biological role, nucleotide-binding protein. This is Nucleotide-binding protein Mflv_5248 from Mycolicibacterium gilvum (strain PYR-GCK) (Mycobacterium gilvum (strain PYR-GCK)).